A 212-amino-acid chain; its full sequence is Glycerol-3-phosphate acyltransferase (212 aa).

A run of 4 helical transmembrane segments spans residues 3 to 23, 78 to 98, 115 to 135, and 155 to 177; these read ILLA…VVVS, DVAV…PVFF, AVHP…AFFF, and FLFG…LLVW.

This sequence belongs to the PlsY family. Probably interacts with PlsX.

It localises to the cell inner membrane. The enzyme catalyses an acyl phosphate + sn-glycerol 3-phosphate = a 1-acyl-sn-glycero-3-phosphate + phosphate. It functions in the pathway lipid metabolism; phospholipid metabolism. In terms of biological role, catalyzes the transfer of an acyl group from acyl-phosphate (acyl-PO(4)) to glycerol-3-phosphate (G3P) to form lysophosphatidic acid (LPA). This enzyme utilizes acyl-phosphate as fatty acyl donor, but not acyl-CoA or acyl-ACP. The protein is Glycerol-3-phosphate acyltransferase of Burkholderia lata (strain ATCC 17760 / DSM 23089 / LMG 22485 / NCIMB 9086 / R18194 / 383).